The sequence spans 430 residues: Putative glycylpeptide N-tetradecanoyltransferase 2 (430 aa).

Residues 47 to 50, 181 to 183, and 189 to 193 each bind tetradecanoyl-CoA; these read HKFW, LCV, and SKGLA. The Proton acceptor; via carboxylate role is filled by L430.

This sequence belongs to the NMT family.

It carries out the reaction N-terminal glycyl-[protein] + tetradecanoyl-CoA = N-tetradecanoylglycyl-[protein] + CoA + H(+). Its function is as follows. May add a myristoyl group to the N-terminal glycine residue of certain cellular proteins. This is Putative glycylpeptide N-tetradecanoyltransferase 2 (NMT2) from Arabidopsis thaliana (Mouse-ear cress).